The primary structure comprises 372 residues: N-methyl-L-tryptophan oxidase (372 aa).

FAD is bound at residue 4 to 34; that stretch reads DLIIIGSGSVGAAAGYYATRAGLNVLMTDAH. S-8alpha-FAD cysteine is present on cysteine 308.

It belongs to the MSOX/MTOX family. MTOX subfamily. In terms of assembly, monomer. FAD is required as a cofactor.

It carries out the reaction N(alpha)-methyl-L-tryptophan + O2 + H2O = L-tryptophan + formaldehyde + H2O2. In terms of biological role, catalyzes the oxidative demethylation of N-methyl-L-tryptophan. The sequence is that of N-methyl-L-tryptophan oxidase from Escherichia coli O81 (strain ED1a).